The sequence spans 358 residues: Alanine racemase (358 aa).

Lysine 35 functions as the Proton acceptor; specific for D-alanine in the catalytic mechanism. Lysine 35 is modified (N6-(pyridoxal phosphate)lysine). Position 130 (arginine 130) interacts with substrate. The active-site Proton acceptor; specific for L-alanine is tyrosine 255. Methionine 303 is a binding site for substrate.

The protein belongs to the alanine racemase family. Pyridoxal 5'-phosphate serves as cofactor.

The enzyme catalyses L-alanine = D-alanine. Its pathway is amino-acid biosynthesis; D-alanine biosynthesis; D-alanine from L-alanine: step 1/1. Catalyzes the interconversion of L-alanine and D-alanine. May also act on other amino acids. The sequence is that of Alanine racemase (alr) from Shewanella sp. (strain W3-18-1).